Here is a 411-residue protein sequence, read N- to C-terminus: SKA complex subunit 3 (411 aa).

Phosphoserine occurs at positions 34, 119, 138, 154, and 158. The segment at 102 to 410 is binds the NDC80 complex; that stretch reads YQARDKEDSG…GTRGAANKEN (309 aa). Phosphothreonine is present on residues T189 and T216. The interval 195-410 is binds microtubules and contacts the microtubule-binding domain of SKA1; the sequence is PSVQVLKTPR…GTRGAANKEN (216 aa). A Phosphoserine modification is found at S289. T297 is modified (phosphothreonine). Phosphoserine is present on residues S324 and S352. The interval 349-410 is required for localization to kinetochores; that stretch reads EPPSSAITSC…GTRGAANKEN (62 aa). T363 carries the post-translational modification Phosphothreonine.

This sequence belongs to the SKA3 family. As to quaternary structure, component of the SKA complex, composed of SKA1, SKA2 and SKA3. The SKA complex is a homodimer organized around a central W-shaped coiled-coil structure, formed by the interacting domains of SKA1, SKA2, and SKA3, each end of the 'W' is extended further by the C-terminal microtubule-binding domains of SKA1 and SKA3; the complex forms extended structures on microtubules. Interacts with the NDC80-NUF2 heterodimer of the NDC80 complex (via coiled coils); the interaction localizes the SKA complex to the kinetochore and is required to establish kinetochore-microtubule end-on attachments. Interacts with polo-like kinase PLK1.

The protein localises to the cytoplasm. It localises to the cytoskeleton. It is found in the spindle. The protein resides in the chromosome. Its subcellular location is the centromere. The protein localises to the kinetochore. It localises to the microtubule organizing center. It is found in the centrosome. In terms of biological role, component of the SKA complex, a microtubule plus end-binding complex of the outer kinetochore that stabilizes spindle microtubule-kinetochore attachments, promotes alignment of chromosomes at the mitotic spindle equator (chromosome congression) and assists suppression of the spindle assembly checkpoint. Kinetochores, consisting of a centromere-associated inner segment and a microtubule-contacting outer segment, play a crucial role in chromosome segregation by mediating the physical connection between centromeric DNA and spindle microtubules. The outer kinetochore is made up of the ten-subunit KMN network complex, comprising the MIS12, NDC80 and KNL1 complexes, and auxiliary microtubule-associated components such as the SKA complex; together they connect the outer kinetochore with the inner kinetochore, bind microtubules, and mediate interactions with mitotic checkpoint proteins that delay anaphase until chromosomes are bioriented on the spindle. The SKA complex is loaded onto bioriented kinetochores and it facilitates chromosome congression by stabilizing microtubules together with MAPRE1, and end-on attachment of the NDC80 complex to depolymerizing spindle microtubules, thereby assisting the poleward-moving kinetochore in withstanding microtubule pulling forces. The complex associates with dynamic microtubule plus-ends and can track both depolymerizing and elongating microtubules. The complex recruits protein phosphatase 1 (PP1) to the kinetochore in prometaphase and metaphase, to oppose spindle assembly checkpoint signaling and promote the onset of anaphase. Within the complex, binds microtubules but with a much lower affinity than SKA1. Promotes stability of the polo-like kinase PLK1 protein. During meiosis the SKA complex stabilizes the meiotic spindle and is required for its migration to the cortex. The protein is SKA complex subunit 3 (Ska3) of Mus musculus (Mouse).